The sequence spans 1049 residues: FERM, ARHGEF and pleckstrin domain-containing protein 1 (1049 aa).

Positions 1–37 (MGEIEQKPTPASRLGAPENSGISTLERGQKPPPTPSG) are disordered. Residues Ser-20 and Ser-23 each carry the phosphoserine modification. Thr-24 is modified (phosphothreonine). Residues 40 to 320 (MTVKIQMLDD…EHHAFFRLFE (281 aa)) enclose the FERM domain. Phosphoserine occurs at positions 340, 373, 389, 403, 427, 433, and 437. Residues 361–537 (FERKHSKIHS…TDDEEEGRRK (177 aa)) form a disordered region. Composition is skewed to polar residues over residues 371-395 (TRSL…SASL) and 402-412 (ESPSAQSCQQA). The span at 435 to 448 (SGSKAADGTAAAAP) shows a compositional bias: low complexity. Composition is skewed to polar residues over residues 473-492 (STGS…NSQG) and 499-514 (VTLS…QASP). A phosphoserine mark is found at Ser-513 and Ser-517. The 192-residue stretch at 543 to 734 (KAYYIAKEVS…TEMVAQLHGT (192 aa)) folds into the DH domain. A PH 1 domain is found at 763–860 (EFIRLGSLSK…WLEDIQMAID (98 aa)). Phosphoserine is present on residues Ser-837, Ser-876, and Ser-882. The interval 866 to 908 (NGPTPELLASSPPDNKSPDEATAADQESEDDLSASRTSLERQA) is disordered. Thr-887 bears the Phosphothreonine mark. Ser-893, Ser-900, and Ser-903 each carry phosphoserine. Residues 936–1033 (ENQLSGNLLR…WMEVIRSATS (98 aa)) enclose the PH 2 domain.

In terms of assembly, interacts with CADM1. Interacts with RAC1. As to expression, detected in forbrain (at protein level).

The protein localises to the cell membrane. The protein resides in the synapse. It localises to the synaptosome. It is found in the cytoplasm. Its subcellular location is the cytosol. The protein localises to the cell projection. The protein resides in the filopodium. It localises to the dendrite. It is found in the dendritic spine. Its function is as follows. May play a role in semaphorin signaling. Functions as a guanine nucleotide exchange factor for RAC1. Plays a role in the assembly and disassembly of dendritic filopodia, the formation of dendritic spines, regulation of dendrite length and ultimately the formation of synapses. This Rattus norvegicus (Rat) protein is FERM, ARHGEF and pleckstrin domain-containing protein 1 (Farp1).